We begin with the raw amino-acid sequence, 570 residues long: Protein FAM227A (570 aa).

The span at Leu-87–Val-99 shows a compositional bias: basic and acidic residues. Disordered stretches follow at residues Leu-87–Ser-112, Pro-336–Ala-374, and Lys-519–Pro-570. Tyr-343 bears the Phosphotyrosine mark. A compositionally biased stretch (polar residues) spans Pro-345 to Gln-362. Ser-348 and Ser-349 each carry phosphoserine. Basic and acidic residues-rich tracts occupy residues Asn-363–Ala-374 and Ser-540–His-562.

The protein belongs to the FAM227 family.

This chain is Protein FAM227A (FAM227A), found in Homo sapiens (Human).